A 282-amino-acid polypeptide reads, in one-letter code: Protoheme IX farnesyltransferase (282 aa).

9 helical membrane passes run 9-29, 39-59, 79-99, 102-122, 139-159, 165-185, 210-230, 231-251, and 261-281; these read LAKP…FLLA, LPLF…GCVF, LVTG…LLIL, LVLY…GFIV, VLGG…VVNI, LALF…IAML, IMLF…VLGS, ADLF…YKSI, and VFAK…CLTM.

The protein belongs to the UbiA prenyltransferase family. Protoheme IX farnesyltransferase subfamily.

It is found in the cell inner membrane. It catalyses the reaction heme b + (2E,6E)-farnesyl diphosphate + H2O = Fe(II)-heme o + diphosphate. Its pathway is porphyrin-containing compound metabolism; heme O biosynthesis; heme O from protoheme: step 1/1. Converts heme B (protoheme IX) to heme O by substitution of the vinyl group on carbon 2 of heme B porphyrin ring with a hydroxyethyl farnesyl side group. The protein is Protoheme IX farnesyltransferase of Francisella tularensis subsp. tularensis (strain FSC 198).